A 332-amino-acid chain; its full sequence is Ferredoxin--NADP reductase 1 (332 aa).

The FAD site is built by Asp35, Lys43, Phe48, Val88, Phe123, Asp284, and Thr325.

The protein belongs to the ferredoxin--NADP reductase type 2 family. Homodimer. FAD serves as cofactor.

It catalyses the reaction 2 reduced [2Fe-2S]-[ferredoxin] + NADP(+) + H(+) = 2 oxidized [2Fe-2S]-[ferredoxin] + NADPH. The protein is Ferredoxin--NADP reductase 1 of Listeria monocytogenes serotype 4b (strain F2365).